The chain runs to 589 residues: 2-succinyl-5-enolpyruvyl-6-hydroxy-3-cyclohexene-1-carboxylate synthase (589 aa).

The segment at 198–222 (DAATTEGAHDSHAPSQPTRGPRKLP) is disordered.

Belongs to the TPP enzyme family. MenD subfamily. As to quaternary structure, homodimer. The cofactor is Mg(2+). Mn(2+) is required as a cofactor. It depends on thiamine diphosphate as a cofactor.

It carries out the reaction isochorismate + 2-oxoglutarate + H(+) = 5-enolpyruvoyl-6-hydroxy-2-succinyl-cyclohex-3-ene-1-carboxylate + CO2. It functions in the pathway quinol/quinone metabolism; 1,4-dihydroxy-2-naphthoate biosynthesis; 1,4-dihydroxy-2-naphthoate from chorismate: step 2/7. It participates in quinol/quinone metabolism; menaquinone biosynthesis. Its function is as follows. Catalyzes the thiamine diphosphate-dependent decarboxylation of 2-oxoglutarate and the subsequent addition of the resulting succinic semialdehyde-thiamine pyrophosphate anion to isochorismate to yield 2-succinyl-5-enolpyruvyl-6-hydroxy-3-cyclohexene-1-carboxylate (SEPHCHC). This Corynebacterium jeikeium (strain K411) protein is 2-succinyl-5-enolpyruvyl-6-hydroxy-3-cyclohexene-1-carboxylate synthase.